A 292-amino-acid chain; its full sequence is 4-hydroxy-tetrahydrodipicolinate synthase (292 aa).

Residue Thr-45 participates in pyruvate binding. Tyr-133 (proton donor/acceptor) is an active-site residue. The active-site Schiff-base intermediate with substrate is the Lys-161. Ile-203 contributes to the pyruvate binding site.

It belongs to the DapA family. Homodimer.

Its subcellular location is the cytoplasm. The catalysed reaction is L-aspartate 4-semialdehyde + pyruvate = (2S,4S)-4-hydroxy-2,3,4,5-tetrahydrodipicolinate + H2O + H(+). Its pathway is amino-acid biosynthesis; L-lysine biosynthesis via DAP pathway; (S)-tetrahydrodipicolinate from L-aspartate: step 3/4. Its function is as follows. Catalyzes the condensation of (S)-aspartate-beta-semialdehyde [(S)-ASA] and pyruvate to 4-hydroxy-tetrahydrodipicolinate (HTPA). The polypeptide is 4-hydroxy-tetrahydrodipicolinate synthase (Ectopseudomonas mendocina (strain ymp) (Pseudomonas mendocina)).